The primary structure comprises 75 residues: MNKSKRSSRRRMPPIRSGEIIDYKNISLLRRFVSEQGKILSRRMNRLTSKQQRLLTIAIKRARVLALLPFLNNEN.

Belongs to the bacterial ribosomal protein bS18 family. As to quaternary structure, part of the 30S ribosomal subunit.

The protein localises to the plastid. It localises to the chloroplast. The polypeptide is Small ribosomal subunit protein bS18c (rps18) (Marchantia polymorpha (Common liverwort)).